The chain runs to 250 residues: Cobalt transport protein CbiM (250 aa).

Positions 1–25 (MKQNIKLGVIAALMLIVLTPVTSNA) are cleaved as a signal peptide. 6 helical membrane-spanning segments follow: residues 33 to 53 (LPVK…LVGL), 68 to 88 (VLLA…IPSV), 100 to 120 (LGAI…VLIF), 132 to 152 (TLGA…FLIF), 163 to 183 (AMPV…VTSI), and 205 to 225 (GIFF…TVIV).

It belongs to the CbiM family. In terms of assembly, forms an energy-coupling factor (ECF) transporter complex composed of an ATP-binding protein (A component, CbiO), a transmembrane protein (T component, CbiQ) and 2 possible substrate-capture proteins (S components, CbiM and CbiN) of unknown stoichimetry.

It localises to the cell membrane. The protein operates within cofactor biosynthesis; adenosylcobalamin biosynthesis. Its function is as follows. Part of the energy-coupling factor (ECF) transporter complex CbiMNOQ involved in cobalt import. This Clostridioides difficile (strain R20291) (Peptoclostridium difficile) protein is Cobalt transport protein CbiM.